Here is a 603-residue protein sequence, read N- to C-terminus: Growth-regulating factor 6 (603 aa).

A disordered region spans residues 34–58 (KHGRGNAGDQEHEWRPPAKQARGGD). The 36-residue stretch at 158 to 193 (PFTPSQWIELEHQALIYKYLAANSPVPHSLLIPIRR) folds into the QLQ domain. Residues 223-267 (DPEPGRCRRTDGKKWRCSRDAVADQKYCERHMNRGRHRSRKHVEG) form the WRC domain. 2 short sequence motifs (bipartite nuclear localization signal) span residues 228 to 238 (RCRRTDGKKWR) and 256 to 263 (RGRHRSRK). Positions 561–571 (FGSVSSSTGSS) are enriched in low complexity. The disordered stretch occupies residues 561-582 (FGSVSSSTGSSPRLENHSVYDG).

The protein belongs to the GRF family.

It is found in the nucleus. Its function is as follows. Transcription activator that plays a regulatory role in gibberellin-induced stem elongation. This is Growth-regulating factor 6 (GRF6) from Oryza sativa subsp. japonica (Rice).